The primary structure comprises 292 residues: Sulfhydrogenase 1 subunit gamma (292 aa).

Residues 15-115 (YALHRVKVLK…RGPYGNGFPV (101 aa)) form the FAD-binding FR-type domain. [2Fe-2S] cluster is bound by residues Cys253, Cys258, Cys261, and Cys273.

Heterotetramer of alpha, beta, gamma and delta subunits. The nickel-containing alpha and delta subunits constitute the hydrogenase activity. The beta and gamma subunits (flavin-containing dimer) constitute the sulfur reductase activity. The cofactor is FAD. It depends on [2Fe-2S] cluster as a cofactor.

The protein localises to the cytoplasm. The catalysed reaction is n sulfur + H2 = (n-1) sulfur + hydrogen sulfide + H(+). Its activity is regulated as follows. Stimulated by rubredoxin at pH 7.6 but not ferredoxin. Part of a bifunctional enzyme complex that functions as an NADPH-dependent hydrogen-evolving hydrogenase with sulfur reducing activity. May play a role in hydrogen cycling during fermentative growth. Activity not exhibited with NAD. The beta and gamma subunits form the sulfur reducing component that catalyzes the cytoplasmic production of hydrogen sulfide in the presence of elemental sulfur. Not active in the presence of sodium sulfate, sodium sulfite, sodium thiosulfate or cysteine. This chain is Sulfhydrogenase 1 subunit gamma, found in Pyrococcus furiosus (strain ATCC 43587 / DSM 3638 / JCM 8422 / Vc1).